The primary structure comprises 323 residues: Cytochrome c biogenesis protein CcsA (323 aa).

8 consecutive transmembrane segments (helical) span residues 18–38 (VSVV…VGLY), 43–63 (KGML…WVYW), 71–91 (LYES…IPSF), 99–119 (LNVI…SGLL), 146–166 (LGYA…IIIF), 227–247 (VISL…VWAN), 256–276 (WDPK…YLHI), and 288–308 (AIVA…VNLL).

This sequence belongs to the CcmF/CycK/Ccl1/NrfE/CcsA family. In terms of assembly, may interact with Ccs1.

The protein resides in the plastid. The protein localises to the chloroplast thylakoid membrane. Required during biogenesis of c-type cytochromes (cytochrome c6 and cytochrome f) at the step of heme attachment. The chain is Cytochrome c biogenesis protein CcsA from Spinacia oleracea (Spinach).